The primary structure comprises 62 residues: Photosystem II reaction center protein Z (62 aa).

Helical transmembrane passes span 8 to 28 (AVFA…AVFA) and 41 to 61 (FSGA…NSSV).

It belongs to the PsbZ family. PSII is composed of 1 copy each of membrane proteins PsbA, PsbB, PsbC, PsbD, PsbE, PsbF, PsbH, PsbI, PsbJ, PsbK, PsbL, PsbM, PsbT, PsbY, PsbZ, Psb30/Ycf12, at least 3 peripheral proteins of the oxygen-evolving complex and a large number of cofactors. It forms dimeric complexes.

It localises to the plastid. The protein resides in the chloroplast thylakoid membrane. In terms of biological role, may control the interaction of photosystem II (PSII) cores with the light-harvesting antenna, regulates electron flow through the 2 photosystem reaction centers. PSII is a light-driven water plastoquinone oxidoreductase, using light energy to abstract electrons from H(2)O, generating a proton gradient subsequently used for ATP formation. In Selaginella uncinata (Blue spike-moss), this protein is Photosystem II reaction center protein Z.